A 433-amino-acid polypeptide reads, in one-letter code: Monodehydroascorbate reductase (433 aa).

Residues 12-15, glutamate 39, arginine 46, lysine 51, isoleucine 94, and 145-146 contribute to the FAD site; these read GGVS and RE. NAD(+)-binding positions include 170–176, glutamate 194, arginine 200, and glycine 259; that span reads GGYIGLE. Residue 172–176 coordinates NADP(+); sequence YIGLE. 2 residues coordinate NADP(+): arginine 200 and glycine 259. Aspartate 296 lines the FAD pocket. 312 to 313 contributes to the NAD(+) binding site; the sequence is EH. 312–313 is a binding site for NADP(+); the sequence is EH. FAD is bound at residue valine 314. An L-ascorbate-binding site is contributed by arginine 318. Tyrosine 347 is an FAD binding site. Residue tyrosine 347 participates in NAD(+) binding. Tyrosine 347 is a binding site for NADP(+). Position 349 (arginine 349) interacts with L-ascorbate.

Belongs to the FAD-dependent oxidoreductase family. It depends on FAD as a cofactor. In terms of tissue distribution, expressed at relatively low levels in all tissues examined.

Its subcellular location is the cytoplasm. It carries out the reaction 2 monodehydro-L-ascorbate radical + NADH + H(+) = 2 L-ascorbate + NAD(+). Catalyzes the conversion of monodehydroascorbate to ascorbate, oxidizing NADH in the process. The sequence is that of Monodehydroascorbate reductase from Pisum sativum (Garden pea).